The primary structure comprises 79 residues: Acyl carrier protein (79 aa).

One can recognise a Carrier domain in the interval 2-77; the sequence is SDIAERVKKI…DAVKFLEKNS (76 aa). Serine 37 is modified (O-(pantetheine 4'-phosphoryl)serine).

Belongs to the acyl carrier protein (ACP) family. In terms of processing, 4'-phosphopantetheine is transferred from CoA to a specific serine of apo-ACP by AcpS. This modification is essential for activity because fatty acids are bound in thioester linkage to the sulfhydryl of the prosthetic group.

The protein resides in the cytoplasm. It functions in the pathway lipid metabolism; fatty acid biosynthesis. Functionally, carrier of the growing fatty acid chain in fatty acid biosynthesis. The protein is Acyl carrier protein of Methylobacterium radiotolerans (strain ATCC 27329 / DSM 1819 / JCM 2831 / NBRC 15690 / NCIMB 10815 / 0-1).